A 789-amino-acid polypeptide reads, in one-letter code: Protein FLOWERING LOCUS D (789 aa).

Residues 1-23 (MVSFSAPKKRRRGRSQRSMSSLN) form a disordered region. The SWIRM domain maps to 76 to 177 (NKEATTEALL…FGIAQAIKDK (102 aa)). FAD-binding positions include Ser195, Glu214, Arg216, Arg222, and 240-243 (GGSV). A Glycyl lysine isopeptide (Lys-Gly) (interchain with G-Cter in SUMO) cross-link involves residue Lys287. FAD-binding positions include Glu595, 604 to 605 (TM), and 607 to 612 (GAFVTG). Glycyl lysine isopeptide (Lys-Gly) (interchain with G-Cter in SUMO) cross-links involve residues Lys693 and Lys770.

It belongs to the flavin monoamine oxidase family. As to quaternary structure, interacts with HDA6. The cofactor is FAD. In terms of processing, sumoylated at Lys-287, Lys-693 and Lys-770 by SIZ1. Sumoylation alters its activity and the histone H4 acetylation status of FLC locus, promoting FLC expression.

In terms of biological role, probable histone demethylase that promotes flowering independently of the photoperiod and vernalization pathways by repressing FLOWERING LOCUS C (FLC), a floral repressor that blocks the transition from vegetative to reproductive development. Probably mediates histone H3 'Lys-4' demethylation at FLC locus. Seems to act in partial redundancy with LDL1 and LDL2 to repress FLC expression. Required for histone H4 deacetylation of FLC locus. May be a component of the histone deacetylase complex. Forms a histone deacetylase complex with HDA5, HDA6 and MSI4/FVE that represses FLC gene expression to control flowering time. Required for systemic acquired resistance (SAR) toward pathogenic bacteria (e.g. Pseudomonas syringae pv tomato DC3000 (avrPto)). Together with FLD and MSI4/FVE, contributes to dehydroabietinal-dependent (DA, a diterpenoid tricyclic diterpene) activation of flowering ans SAR. In Arabidopsis thaliana (Mouse-ear cress), this protein is Protein FLOWERING LOCUS D.